Reading from the N-terminus, the 67-residue chain is Cell division protein ZapB (67 aa).

Residues Leu-3–Val-59 adopt a coiled-coil conformation.

Belongs to the ZapB family. In terms of assembly, homodimer. The ends of the coiled-coil dimer bind to each other, forming polymers. Interacts with FtsZ.

The protein localises to the cytoplasm. In terms of biological role, non-essential, abundant cell division factor that is required for proper Z-ring formation. It is recruited early to the divisome by direct interaction with FtsZ, stimulating Z-ring assembly and thereby promoting cell division earlier in the cell cycle. Its recruitment to the Z-ring requires functional FtsA or ZipA. The polypeptide is Cell division protein ZapB (Shewanella amazonensis (strain ATCC BAA-1098 / SB2B)).